We begin with the raw amino-acid sequence, 65 residues long: Lantibiotic lacticin 3147 A2 (65 aa).

Positions 1–36 (MKEKNMKKNDTIELQLGKYLEDDMIELAEGDESHGG) are excised as a propeptide. Position 37 is a 2-oxobutanoic acid (Thr37). 2,3-didehydrobutyrine is present on residues Thr38 and Thr41. Ser45 and Ser48 each carry 2,3-didehydroalanine (Ser). Positions 52–56 (STNTC) form a cross-link, lanthionine (Ser-Cys). 2 cross-links (beta-methyllanthionine (Thr-Cys)) span residues 58–61 (TTKC) and 62–65 (TRAC).

Maturation of lantibiotics involves the enzymatic conversion of Thr, and Ser into dehydrated AA and the formation of thioether bonds with cysteine. This is followed by membrane translocation and cleavage of the modified precursor. In terms of processing, it is not established whether the 2,3-didehydrobutyrines are the E- or Z-isomers. In the NMR model they were assumed to be the Z-isomer.

The protein resides in the secreted. Lanthionine-containing peptide antibiotic (lantibiotic) active on Gram-positive bacteria. The bactericidal activity of lantibiotics is based on depolarization of energized bacterial cytoplasmic membranes, initiated by the formation of aqueous transmembrane pores. When present individually lacticin 3147 A2 exhibits weak activity towards L.lactis strain AM2 and L.lactis strain HP, and no activity towards L.lactis strain IFPL359, but when combined with lacticin 3147 A1 it displays strong activity towards all three strains. The polypeptide is Lantibiotic lacticin 3147 A2 (Lactococcus lactis subsp. lactis (Streptococcus lactis)).